The sequence spans 1345 residues: Major capsid protein (1345 aa).

This sequence belongs to the herpesviridae major capsid protein family. As to quaternary structure, homomultimer. Makes the hexons and eleven out of twelve pentons. Interacts with triplex proteins 1/TRX1 and 2/TRX2; adjacent capsomers are linked together in groups of three by triplexes, heterotrimeric complexes composed of one molecule of TRX1 and two molecules of TRX2. Interacts with scaffold protein; this interaction allows efficient MCP transport to the host nucleus. Interacts with capsid vertex component 2/CVC2. Interacts with the small capsomere-interacting protein/SCP.

The protein resides in the virion. Its subcellular location is the host nucleus. Self-assembles to form an icosahedral capsid with a T=16 symmetry, about 200 nm in diameter, and consisting of 150 hexons and 12 pentons (total of 162 capsomers). Hexons form the edges and faces of the capsid and are each composed of six MCP molecules. In contrast, one penton is found at each of the 12 vertices. Eleven of the pentons are MCP pentamers, while the last vertex is occupied by the portal complex. The capsid is surrounded by a layer of proteinaceous material designated the tegument which, in turn, is enclosed in an envelope of host cell-derived lipids containing virus-encoded glycoproteins. The protein is Major capsid protein of Human herpesvirus 6A (strain Uganda-1102) (HHV-6 variant A).